A 582-amino-acid chain; its full sequence is Putative BTB/POZ domain-containing protein At3g08660 (582 aa).

Residues 1-21 (MGSDSTLSLPSSSPPCNNRSS) are disordered. A BTB domain is found at 36-103 (GDIIVVVDGE…CYGINFDITA (68 aa)). Residues 196–466 (EMWTEELSAL…VRVLYTEQLR (271 aa)) form the NPH3 domain. Tyr407 carries the phosphotyrosine modification. The interval 558–582 (GGETRQKVNRKSRSVSERKSSRSGR) is disordered. The segment covering 571-582 (SVSERKSSRSGR) has biased composition (basic and acidic residues).

The protein belongs to the NPH3 family.

It participates in protein modification; protein ubiquitination. May act as a substrate-specific adapter of an E3 ubiquitin-protein ligase complex (CUL3-RBX1-BTB) which mediates the ubiquitination and subsequent proteasomal degradation of target proteins. The polypeptide is Putative BTB/POZ domain-containing protein At3g08660 (Arabidopsis thaliana (Mouse-ear cress)).